The sequence spans 612 residues: Coagulation factor XII (612 aa).

An N-terminal signal peptide occupies residues 1 to 19 (MRALLLLGALLVSLESTVS). The region spanning 42–90 (VTGEPCHFPFQYHRQLHHKCIHRGRPGPRPWCATTPNFEKDQRWAYCLE) is the Fibronectin type-II domain. 20 disulfides stabilise this stretch: cysteine 47-cysteine 73, cysteine 61-cysteine 88, cysteine 98-cysteine 110, cysteine 104-cysteine 119, cysteine 121-cysteine 130, cysteine 135-cysteine 163, cysteine 161-cysteine 170, cysteine 178-cysteine 189, cysteine 183-cysteine 198, cysteine 200-cysteine 209, cysteine 217-cysteine 306, cysteine 240-cysteine 288, cysteine 268-cysteine 301, cysteine 355-cysteine 482, cysteine 393-cysteine 409, cysteine 401-cysteine 471, cysteine 432-cysteine 435, cysteine 498-cysteine 566, cysteine 529-cysteine 545, and cysteine 556-cysteine 587. The 38-residue stretch at 94-131 (VKDHCSKHNPCQKGGTCVNMPDGPRCICADHFTGKHCQ) folds into the EGF-like 1 domain. O-linked (Fuc) threonine glycosylation occurs at threonine 109. Residues 133-173 (EKCFEPQFFRFFHENEIWHRLEPAGVVKCQCKGPNAQCKPL) enclose the Fibronectin type-I domain. Residues 174 to 210 (ASQVCRTNPCLNGGSCLQAEGHRLCRCAPSFAGRLCD) form the EGF-like 2 domain. The 90-residue stretch at 217 to 306 (CYDDRDRGLS…SWNYCRLAPC (90 aa)) folds into the Kringle domain. N-linked (GlcNAc...) asparagine glycosylation is found at asparagine 251 and asparagine 282. The Peptidase S1 domain occupies 369–611 (VVGGLVALPG…YLAWIREHTA (243 aa)). Histidine 408 acts as the Charge relay system in catalysis. Asparagine 429 carries N-linked (GlcNAc...) asparagine glycosylation. The active-site Charge relay system is the aspartate 457. The Charge relay system role is filled by serine 560.

It belongs to the peptidase S1 family. In terms of assembly, interacts with HRG; the interaction, which is enhanced in the presence of zinc ions and inhibited by heparin-binding, inhibits factor XII autoactivation and contact-initiated coagulation. Post-translationally, O- and N-glycosylated.

It is found in the secreted. It catalyses the reaction Selective cleavage of Arg-|-Ile bonds in factor VII to form factor VIIa and factor XI to form factor XIa.. With respect to regulation, activity is promoted in the presence of negatively charged surfaces. Its function is as follows. Factor XII is a serum glycoprotein that participates in the initiation of blood coagulation, fibrinolysis, and the generation of bradykinin and angiotensin. Prekallikrein is cleaved by factor XII to form kallikrein, which then cleaves factor XII first to alpha-factor XIIa and then to beta-factor XIIa. Alpha-factor XIIa activates factor XI to factor XIa. This is Coagulation factor XII (F12) from Bos taurus (Bovine).